The following is a 329-amino-acid chain: Phenylalanine--tRNA ligase alpha subunit (329 aa).

Residue glutamate 254 participates in Mg(2+) binding.

The protein belongs to the class-II aminoacyl-tRNA synthetase family. Phe-tRNA synthetase alpha subunit type 1 subfamily. Tetramer of two alpha and two beta subunits. Mg(2+) is required as a cofactor.

It localises to the cytoplasm. The enzyme catalyses tRNA(Phe) + L-phenylalanine + ATP = L-phenylalanyl-tRNA(Phe) + AMP + diphosphate + H(+). This is Phenylalanine--tRNA ligase alpha subunit from Haemophilus influenzae (strain 86-028NP).